The primary structure comprises 254 residues: Dihydroanticapsin 7-dehydrogenase (254 aa).

9 to 31 (LITGGASGIGYAAVQAFLNQQAN) contacts NAD(+). Ser139 contacts substrate. The Proton acceptor role is filled by Tyr152.

This sequence belongs to the short-chain dehydrogenases/reductases (SDR) family.

The catalysed reaction is L-dihydroanticapsin + NAD(+) = L-anticapsin + NADH + H(+). It participates in antibiotic biosynthesis; bacilysin biosynthesis. Its function is as follows. Part of the bacABCDEFG operon responsible for the biosynthesis of bacilysin, an irreversible inactivator of the glutaminase domain of glucosamine synthetase. Catalyzes the dehydrogenation of the C7-hydroxyl group in the 4S-tetrahydrotyrosine (4S-H4Tyr) to yield anticapsin (epoxycyclohexanonyl-Ala). The polypeptide is Dihydroanticapsin 7-dehydrogenase (Bacillus amyloliquefaciens (Bacillus velezensis)).